The sequence spans 148 residues: MTESLSNSLKVQLRSADAKVPTKGSTTAAGYDIYASQPGVIPARGQGIAKTDISFTVPVGTYGRIAPRSGLAVKHGIQTGAGVVDRDYTGEVGIVLFNHSDKDFQINKGDRVAQLILEKIVEDAEIVVVESLEETQRGAGGFGSTGKN.

Ser-69, Gly-82, Asp-85, Tyr-88, Arg-137, Phe-142, and Gly-143 together coordinate dUMP.

It belongs to the dUTPase family. In terms of assembly, homotrimer. It depends on Mg(2+) as a cofactor.

It carries out the reaction dUTP + H2O = dUMP + diphosphate + H(+). The protein operates within pyrimidine metabolism; dUMP biosynthesis; dUMP from dCTP (dUTP route): step 2/2. Its function is as follows. Involved in nucleotide metabolism via production of dUMP, the immediate precursor of thymidine nucleotides, and decreases the intracellular concentration of dUTP so that uracil cannot be incorporated into DNA. The chain is Deoxyuridine 5'-triphosphate nucleotidohydrolase (DUT1) from Kluyveromyces lactis (strain ATCC 8585 / CBS 2359 / DSM 70799 / NBRC 1267 / NRRL Y-1140 / WM37) (Yeast).